The following is a 459-amino-acid chain: Exodeoxyribonuclease 7 large subunit (459 aa).

The protein belongs to the XseA family. In terms of assembly, heterooligomer composed of large and small subunits.

The protein resides in the cytoplasm. It catalyses the reaction Exonucleolytic cleavage in either 5'- to 3'- or 3'- to 5'-direction to yield nucleoside 5'-phosphates.. Its function is as follows. Bidirectionally degrades single-stranded DNA into large acid-insoluble oligonucleotides, which are then degraded further into small acid-soluble oligonucleotides. The sequence is that of Exodeoxyribonuclease 7 large subunit from Pseudomonas aeruginosa (strain ATCC 15692 / DSM 22644 / CIP 104116 / JCM 14847 / LMG 12228 / 1C / PRS 101 / PAO1).